A 385-amino-acid chain; its full sequence is MSEALPFPSNKTSTPECNLKTLYWACVHNDLAELQARLDAGVSPEEASQVDSNGRTGLMVACYHGFGSIVALLSCCPFLDVNQQDKDGNTALMLAAQAGHMSLVTLLLNYFAGLDLERRDQRGLTALMKAAIQDRSECVVALLMAGADLSSVDPVRGKTALEWAVLTDSFDTAQKIRQLLRRPQAEQLSLHYQPEWPALAQLVAQAQAQAQAPAAPSLLERLQATLSLSFAQSPQEGGVLDHLVTVTTSLASPFLSTACHTLCPDHPPKLGTRGKSVPELLGTAPPPPPEPHPPQQVPVPQVFAPNQSPQSMFSQWLQSRDSTRSQVPKILLSKAPSPSARYELTLRPQGQQSLAPPVWRFQERKKKEEETEPRGGGLGQAGGSK.

ANK repeat units follow at residues 17 to 46 (CNLKTLYWACVHNDLAELQARLDAGVSPEE), 53 to 83 (NGRTGLMVACYHGFGSIVALLSCCPFLDVNQ), 87 to 116 (DGNTALMLAAQAGHMSLVTLLLNYFAGLDL), 122 to 151 (RGLTALMKAAIQDRSECVVALLMAGADLSS), and 156 to 190 (RGKTALEWAVLTDSFDTAQKIRQLLRRPQAEQLSL). The segment at 270–385 (LGTRGKSVPE…GGLGQAGGSK (116 aa)) is disordered. Over residues 284–297 (APPPPPEPHPPQQV) the composition is skewed to pro residues. Residues 304–326 (APNQSPQSMFSQWLQSRDSTRSQ) show a composition bias toward polar residues. Over residues 361-373 (FQERKKKEEETEP) the composition is skewed to basic and acidic residues. The span at 374–385 (RGGGLGQAGGSK) shows a compositional bias: gly residues.

Isoform 1: Expressed predominantly in the retina. Isoform 2: Expressed in the pineal gland.

Its subcellular location is the cytoplasm. It localises to the cytosol. The protein resides in the nucleus. In terms of biological role, acts as a transcriptional repressor for CRX-activated photoreceptor gene regulation. The chain is Photoreceptor ankyrin repeat protein from Mus musculus (Mouse).